The chain runs to 109 residues: Spermidine export protein MdtI (109 aa).

Transmembrane regions (helical) follow at residues 6-26 (FYPIAFLILAVMLEIVANILL), 36-56 (WLGILSLLSVLGAFSALAQAV), 64-84 (AYALWGGFGIAATVAAGWILF), and 88-108 (LNYKGWIGLILLLAGMVMIKL).

It belongs to the drug/metabolite transporter (DMT) superfamily. Small multidrug resistance (SMR) (TC 2.A.7.1) family. MdtI subfamily. Forms a complex with MdtJ.

It localises to the cell inner membrane. Its function is as follows. Catalyzes the excretion of spermidine. This is Spermidine export protein MdtI from Yersinia pseudotuberculosis serotype O:1b (strain IP 31758).